Reading from the N-terminus, the 654-residue chain is Potassium voltage-gated channel subfamily A member 4 (654 aa).

Topologically, residues 1 to 305 (MEVAMVSAES…LLFEYPESSS (305 aa)) are cytoplasmic. The span at 39–52 (AAAAAVAAATAAVE) shows a compositional bias: low complexity. The tract at residues 39–146 (AAAAAVAAAT…EGRFYYSEDD (108 aa)) is disordered. Positions 81 to 99 (GSRRRRRQRPEKKKAHHRQ) are enriched in basic residues. Ser-122 carries the post-translational modification Phosphoserine. Over residues 122 to 137 (SEEEEEEEDEEEEEEE) the composition is skewed to acidic residues. Residues 306–327 (PARGIAIVSVLVILISIVIFCL) form a helical membrane-spanning segment. Over 328–371 (ETLPEFRDDRDLIMALSAGGHSGLLNDTSAPHLENSGHTIFNDP) the chain is Extracellular. N-linked (GlcNAc...) asparagine glycosylation occurs at Asn-353. Residues 372-393 (FFIVETVCIVWFSFEFVVRCFA) traverse the membrane as a helical segment. The Cytoplasmic portion of the chain corresponds to 394-404 (CPSQALFFKNI). A helical membrane pass occupies residues 405 to 425 (MNIIDIVSILPYFITLGTDLA). Residues 426–440 (QQQGGGNGQQQQAMS) are Extracellular-facing. A helical; Voltage-sensor membrane pass occupies residues 441–461 (FAILRIIRLVRVFRIFKLSRH). The Cytoplasmic portion of the chain corresponds to 462–476 (SKGLQILGHTLRASM). Residues 463-476 (KGLQILGHTLRASM) form an S4-S5 linker region. The chain crosses the membrane as a helical span at residues 477–498 (RELGLLIFFLFIGVILFSSAVY). Residues 499 to 512 (FAEADEPTTHFQSI) lie on the Extracellular side of the membrane. The segment at residues 513 to 524 (PDAFWWAVVTMT) is an intramembrane region (helical). Positions 525 to 530 (TVGYGD) match the Selectivity filter motif. An intramembrane segment occupies 525 to 532 (TVGYGDMK). At 533–539 (PITVGGK) the chain is on the extracellular side. The helical transmembrane segment at 540-568 (IVGSLCAIAGVLTIALPVPVIVSNFNYFY) threads the bilayer. Residues 569–654 (HRETENEEQT…SNAKAVETDV (86 aa)) are Cytoplasmic-facing. At Ser-600 the chain carries Phosphoserine; by PKA. Basic and acidic residues predominate over residues 630 to 641 (CQGKGDDSETDK). A disordered region spans residues 630 to 654 (CQGKGDDSETDKNNCSNAKAVETDV). A PDZ-binding motif is present at residues 652-654 (TDV).

Belongs to the potassium channel family. A (Shaker) (TC 1.A.1.2) subfamily. Kv1.4/KCNA4 sub-subfamily. Homotetramer and heterotetramer of potassium channel proteins. Interacts with KCNAB1 and KCNAB2. Interacts with DLG1, DLG2 and DLG4 via their PDZ domains. Interacts with SIGMAR1. Detected in a complex with KCNA1. Interacts with KCNA2. Part of a complex containing KCNA1, KCNAB1 and LGI1. Interacts (via cytoplasmic N-terminal domain) with KCNRG. As to expression, detectable in brain, atrium, left and right ventricle, and kidney, but not in skeletal muscle, endothelial cells, aorta, and liver.

Its subcellular location is the cell membrane. The protein resides in the cell projection. It is found in the axon. It carries out the reaction K(+)(in) = K(+)(out). Functionally, voltage-gated potassium channel that mediates transmembrane potassium transport in excitable membranes. Forms tetrameric potassium-selective channels through which potassium ions pass in accordance with their electrochemical gradient. The channel alternates between opened and closed conformations in response to the voltage difference across the membrane. Can form functional homotetrameric channels and heterotetrameric channels that contain variable proportions of KCNA1, KCNA2, KCNA4, KCNA5, and possibly other family members as well; channel properties depend on the type of alpha subunits that are part of the channel. Channel properties are modulated by cytoplasmic beta subunits that regulate the subcellular location of the alpha subunits and promote rapid inactivation. In vivo, membranes probably contain a mixture of heteromeric potassium channel complexes, making it difficult to assign currents observed in intact tissues to any particular potassium channel family member. Homotetrameric KCNA4 forms a potassium channel that opens in response to membrane depolarization, followed by rapid spontaneous channel closure. Likewise, a heterotetrameric channel formed by KCNA1 and KCNA4 shows rapid inactivation. This chain is Potassium voltage-gated channel subfamily A member 4 (KCNA4), found in Mustela putorius furo (European domestic ferret).